A 234-amino-acid chain; its full sequence is Sugar fermentation stimulation protein homolog (234 aa).

The protein belongs to the SfsA family.

This chain is Sugar fermentation stimulation protein homolog, found in Idiomarina loihiensis (strain ATCC BAA-735 / DSM 15497 / L2-TR).